We begin with the raw amino-acid sequence, 357 residues long: DNA polymerase IV (357 aa).

Residues 4-185 (IIHVDMDCYF…LSLRQIPGVG (182 aa)) enclose the UmuC domain. Residues D8 and D103 each coordinate Mg(2+). The active site involves E104.

This sequence belongs to the DNA polymerase type-Y family. As to quaternary structure, monomer. It depends on Mg(2+) as a cofactor.

The protein resides in the cytoplasm. The enzyme catalyses DNA(n) + a 2'-deoxyribonucleoside 5'-triphosphate = DNA(n+1) + diphosphate. Functionally, poorly processive, error-prone DNA polymerase involved in untargeted mutagenesis. Copies undamaged DNA at stalled replication forks, which arise in vivo from mismatched or misaligned primer ends. These misaligned primers can be extended by PolIV. Exhibits no 3'-5' exonuclease (proofreading) activity. May be involved in translesional synthesis, in conjunction with the beta clamp from PolIII. This chain is DNA polymerase IV, found in Shewanella oneidensis (strain ATCC 700550 / JCM 31522 / CIP 106686 / LMG 19005 / NCIMB 14063 / MR-1).